Here is a 201-residue protein sequence, read N- to C-terminus: Small ribosomal subunit protein uS4c (201 aa).

The segment at 13 to 43 is disordered; it reads RRLGDLPGLSRKAIKRPYPPGEHGQKPRKPS. The region spanning 90 to 154 is the S4 RNA-binding domain; it reads MRLDNTIFRL…SKQLVESYLA (65 aa).

The protein belongs to the universal ribosomal protein uS4 family. In terms of assembly, part of the 30S ribosomal subunit. Contacts protein S5. The interaction surface between S4 and S5 is involved in control of translational fidelity.

The protein localises to the plastid. Its subcellular location is the chloroplast. One of the primary rRNA binding proteins, it binds directly to 16S rRNA where it nucleates assembly of the body of the 30S subunit. Its function is as follows. With S5 and S12 plays an important role in translational accuracy. The protein is Small ribosomal subunit protein uS4c (rps4) of Porphyra purpurea (Red seaweed).